Consider the following 450-residue polypeptide: Oxygen-independent coproporphyrinogen III oxidase (450 aa).

The 238-residue stretch at 45–282 (IPAGGSISLY…RTLILWDGYQ (238 aa)) folds into the Radical SAM core domain. Tyr54 lines the S-adenosyl-L-methionine pocket. 2 residues coordinate [4Fe-4S] cluster: Cys60 and Cys64. Position 66 (Phe66) interacts with S-adenosyl-L-methionine. A [4Fe-4S] cluster-binding site is contributed by Cys67. Residues Gly111, 112–113 (GT), Glu144, Gln171, Arg183, Asp208, Ala242, and Ile328 each bind S-adenosyl-L-methionine.

The protein belongs to the anaerobic coproporphyrinogen-III oxidase family. As to quaternary structure, monomer. The cofactor is [4Fe-4S] cluster.

The protein localises to the cytoplasm. It carries out the reaction coproporphyrinogen III + 2 S-adenosyl-L-methionine = protoporphyrinogen IX + 2 5'-deoxyadenosine + 2 L-methionine + 2 CO2. The protein operates within porphyrin-containing compound metabolism; protoporphyrin-IX biosynthesis; protoporphyrinogen-IX from coproporphyrinogen-III (AdoMet route): step 1/1. In terms of biological role, involved in the heme and chlorophyll biosynthesis. Catalyzes the anaerobic oxidative decarboxylation of propionate groups of rings A and B of coproporphyrinogen III to yield the vinyl groups in protoporphyrinogen IX. This Cereibacter sphaeroides (strain ATCC 17023 / DSM 158 / JCM 6121 / CCUG 31486 / LMG 2827 / NBRC 12203 / NCIMB 8253 / ATH 2.4.1.) (Rhodobacter sphaeroides) protein is Oxygen-independent coproporphyrinogen III oxidase (hemZ).